The following is a 228-amino-acid chain: MLTRKQMELLDFIKTRMDRDGVPPSFDEMKDALDLRSKSGIHRLITALEERGFIRRLAHRARAIEIVKLPEAMERAGFAPRVIEGDRTEPPRGARPVETANALDLPLMGRIAAGLPIEAITDGAQSVTVPSMMLSGRGQHYALEVRGDSMIEAGINDGDIVVIREQQTADNGDIVVALVADHEATLKRFRRRGGMIALEPANASYETQVYPDHMVKVQGRLVGLIRSY.

The H-T-H motif DNA-binding region spans 26–46 (FDEMKDALDLRSKSGIHRLIT). Residues Ser149 and Lys187 each act as for autocatalytic cleavage activity in the active site.

Belongs to the peptidase S24 family. In terms of assembly, homodimer.

The enzyme catalyses Hydrolysis of Ala-|-Gly bond in repressor LexA.. In terms of biological role, represses a number of genes involved in the response to DNA damage (SOS response), including recA and lexA. In the presence of single-stranded DNA, RecA interacts with LexA causing an autocatalytic cleavage which disrupts the DNA-binding part of LexA, leading to derepression of the SOS regulon and eventually DNA repair. The sequence is that of LexA repressor from Cereibacter sphaeroides (strain ATCC 17025 / ATH 2.4.3) (Rhodobacter sphaeroides).